The following is a 333-amino-acid chain: Glycerol-3-phosphate dehydrogenase [NAD(P)+] (333 aa).

Residues W13, K33, and K108 each coordinate NADPH. Sn-glycerol 3-phosphate-binding residues include K108 and G138. S142 is an NADPH binding site. K193, D246, S256, R257, and N258 together coordinate sn-glycerol 3-phosphate. K193 acts as the Proton acceptor in catalysis. Residue R257 participates in NADPH binding. NADPH-binding residues include V281 and E283.

This sequence belongs to the NAD-dependent glycerol-3-phosphate dehydrogenase family.

The protein localises to the cytoplasm. The catalysed reaction is sn-glycerol 3-phosphate + NAD(+) = dihydroxyacetone phosphate + NADH + H(+). It catalyses the reaction sn-glycerol 3-phosphate + NADP(+) = dihydroxyacetone phosphate + NADPH + H(+). It participates in membrane lipid metabolism; glycerophospholipid metabolism. Catalyzes the reduction of the glycolytic intermediate dihydroxyacetone phosphate (DHAP) to sn-glycerol 3-phosphate (G3P), the key precursor for phospholipid synthesis. The protein is Glycerol-3-phosphate dehydrogenase [NAD(P)+] of Bifidobacterium longum (strain NCC 2705).